Reading from the N-terminus, the 337-residue chain is Heme A synthase (337 aa).

Helical transmembrane passes span Ile6–Ile26, Phe87–Phe107, Leu119–Val139, Leu154–Lys174, and Leu192–Val212. Residue His256 participates in heme binding. The next 3 membrane-spanning stretches (helical) occupy residues Leu258–Glu278, Ile285–Leu305, and Val308–Ile328. Position 316 (His316) interacts with heme.

This sequence belongs to the COX15/CtaA family. Type 2 subfamily. In terms of assembly, interacts with CtaB. The cofactor is heme b.

The protein localises to the cell membrane. It catalyses the reaction Fe(II)-heme o + 2 A + H2O = Fe(II)-heme a + 2 AH2. The protein operates within porphyrin-containing compound metabolism; heme A biosynthesis; heme A from heme O: step 1/1. Functionally, catalyzes the conversion of heme O to heme A by two successive hydroxylations of the methyl group at C8. The first hydroxylation forms heme I, the second hydroxylation results in an unstable dihydroxymethyl group, which spontaneously dehydrates, resulting in the formyl group of heme A. This chain is Heme A synthase, found in Rickettsia conorii (strain ATCC VR-613 / Malish 7).